The following is a 199-amino-acid chain: NAD(P)H dehydrogenase (quinone) (199 aa).

One can recognise a Flavodoxin-like domain in the interval 4–190 (ILVLYYSMYG…KIARYQGEHV (187 aa)). Residues 10-15 (SMYGHI) and 79-81 (TRF) each bind FMN. Y12 provides a ligand contact to NAD(+). Residue W99 participates in substrate binding. An FMN-binding site is contributed by H134.

Belongs to the WrbA family. FMN serves as cofactor.

It catalyses the reaction a quinone + NADH + H(+) = a quinol + NAD(+). The catalysed reaction is a quinone + NADPH + H(+) = a quinol + NADP(+). The chain is NAD(P)H dehydrogenase (quinone) from Photorhabdus laumondii subsp. laumondii (strain DSM 15139 / CIP 105565 / TT01) (Photorhabdus luminescens subsp. laumondii).